The following is a 257-amino-acid chain: 2,3,4,5-tetrahydropyridine-2,6-dicarboxylate N-acetyltransferase (257 aa).

It belongs to the transferase hexapeptide repeat family. DapH subfamily.

It carries out the reaction (S)-2,3,4,5-tetrahydrodipicolinate + acetyl-CoA + H2O = L-2-acetamido-6-oxoheptanedioate + CoA. Its pathway is amino-acid biosynthesis; L-lysine biosynthesis via DAP pathway; LL-2,6-diaminopimelate from (S)-tetrahydrodipicolinate (acetylase route): step 1/3. In terms of biological role, catalyzes the transfer of an acetyl group from acetyl-CoA to tetrahydrodipicolinate. In Lactococcus lactis subsp. cremoris (strain SK11), this protein is 2,3,4,5-tetrahydropyridine-2,6-dicarboxylate N-acetyltransferase.